The following is a 210-amino-acid chain: Probable GTP-binding protein EngB (210 aa).

The EngB-type G domain maps to glutamine 30–leucine 204. Residues glycine 38–serine 45, glycine 64–leucine 68, aspartate 82–glycine 85, threonine 149–aspartate 152, and leucine 182–alanine 185 contribute to the GTP site. Residues serine 45 and threonine 66 each coordinate Mg(2+).

Belongs to the TRAFAC class TrmE-Era-EngA-EngB-Septin-like GTPase superfamily. EngB GTPase family. The cofactor is Mg(2+).

In terms of biological role, necessary for normal cell division and for the maintenance of normal septation. This is Probable GTP-binding protein EngB from Pseudomonas putida (strain ATCC 700007 / DSM 6899 / JCM 31910 / BCRC 17059 / LMG 24140 / F1).